Here is a 209-residue protein sequence, read N- to C-terminus: Imidazoleglycerol-phosphate dehydratase (209 aa).

The protein belongs to the imidazoleglycerol-phosphate dehydratase family.

It localises to the cytoplasm. The catalysed reaction is D-erythro-1-(imidazol-4-yl)glycerol 3-phosphate = 3-(imidazol-4-yl)-2-oxopropyl phosphate + H2O. It participates in amino-acid biosynthesis; L-histidine biosynthesis; L-histidine from 5-phospho-alpha-D-ribose 1-diphosphate: step 6/9. In Paracidovorax citrulli (strain AAC00-1) (Acidovorax citrulli), this protein is Imidazoleglycerol-phosphate dehydratase.